A 201-amino-acid chain; its full sequence is MYIGRFLVLGKTDEGNPFVTYRVSSRSFPNRVAKVMDDNTVAILPKDLEEMFKNPYITYNCVKLVGDVAIATNGSHTDIIADKIKLGLPIRDALSYSLLTMDYEKDDYNTPRIAVVLTKDSAYMGYVSENDVRIKKVELESGKAYYLSVYEACNITKHQVISVAGKTAEEVTKFVMDYEEFEKPVTAATVLLKDGFKLATL.

This sequence belongs to the archaeal IMP cyclohydrolase family.

The enzyme catalyses IMP + H2O = 5-formamido-1-(5-phospho-D-ribosyl)imidazole-4-carboxamide. It functions in the pathway purine metabolism; IMP biosynthesis via de novo pathway; IMP from 5-formamido-1-(5-phospho-D-ribosyl)imidazole-4-carboxamide: step 1/1. Its function is as follows. Catalyzes the cyclization of 5-formylamidoimidazole-4-carboxamide ribonucleotide to IMP. The polypeptide is IMP cyclohydrolase (Methanococcus maripaludis (strain C7 / ATCC BAA-1331)).